The following is a 177-amino-acid chain: Large ribosomal subunit protein uL6 (177 aa).

Belongs to the universal ribosomal protein uL6 family. Part of the 50S ribosomal subunit.

In terms of biological role, this protein binds to the 23S rRNA, and is important in its secondary structure. It is located near the subunit interface in the base of the L7/L12 stalk, and near the tRNA binding site of the peptidyltransferase center. This is Large ribosomal subunit protein uL6 from Brucella melitensis biotype 1 (strain ATCC 23456 / CCUG 17765 / NCTC 10094 / 16M).